The chain runs to 96 residues: NADH-quinone oxidoreductase subunit K (96 aa).

Transmembrane regions (helical) follow at residues 1–21, 25–45, and 56–76; these read MNYI…VLVR, IIVF…FVAF, and VIAF…LAII.

This sequence belongs to the complex I subunit 4L family. NDH-1 is composed of 14 different subunits. Subunits NuoA, H, J, K, L, M, N constitute the membrane sector of the complex.

Its subcellular location is the cell membrane. The enzyme catalyses a quinone + NADH + 5 H(+)(in) = a quinol + NAD(+) + 4 H(+)(out). NDH-1 shuttles electrons from NADH, via FMN and iron-sulfur (Fe-S) centers, to quinones in the respiratory chain. The immediate electron acceptor for the enzyme in this species is believed to be a menaquinone. Couples the redox reaction to proton translocation (for every two electrons transferred, four hydrogen ions are translocated across the cytoplasmic membrane), and thus conserves the redox energy in a proton gradient. This is NADH-quinone oxidoreductase subunit K from Thermobifida fusca (strain YX).